The chain runs to 97 residues: Co-chaperonin GroES (97 aa).

This sequence belongs to the GroES chaperonin family. In terms of assembly, heptamer of 7 subunits arranged in a ring. Interacts with the chaperonin GroEL.

The protein localises to the cytoplasm. Its function is as follows. Together with the chaperonin GroEL, plays an essential role in assisting protein folding. The GroEL-GroES system forms a nano-cage that allows encapsulation of the non-native substrate proteins and provides a physical environment optimized to promote and accelerate protein folding. GroES binds to the apical surface of the GroEL ring, thereby capping the opening of the GroEL channel. The polypeptide is Co-chaperonin GroES (Pectobacterium atrosepticum (strain SCRI 1043 / ATCC BAA-672) (Erwinia carotovora subsp. atroseptica)).